A 504-amino-acid polypeptide reads, in one-letter code: Cytochrome P450 6B7 (504 aa).

Cys445 provides a ligand contact to heme.

The protein belongs to the cytochrome P450 family. Requires heme as cofactor.

It localises to the endoplasmic reticulum membrane. It is found in the microsome membrane. The enzyme catalyses an organic molecule + reduced [NADPH--hemoprotein reductase] + O2 = an alcohol + oxidized [NADPH--hemoprotein reductase] + H2O + H(+). In Helicoverpa armigera (Cotton bollworm), this protein is Cytochrome P450 6B7 (CYP6B7).